A 362-amino-acid chain; its full sequence is DNA replication and repair protein RecF (362 aa).

Residue 30–37 (GDNAQGKT) participates in ATP binding.

The protein belongs to the RecF family.

The protein localises to the cytoplasm. Its function is as follows. The RecF protein is involved in DNA metabolism; it is required for DNA replication and normal SOS inducibility. RecF binds preferentially to single-stranded, linear DNA. It also seems to bind ATP. This is DNA replication and repair protein RecF from Agathobacter rectalis (strain ATCC 33656 / DSM 3377 / JCM 17463 / KCTC 5835 / VPI 0990) (Eubacterium rectale).